The sequence spans 247 residues: Protein GrpE (247 aa).

Residues 31–49 show a composition bias toward basic and acidic residues; it reads QKEETKTTNKDNQKEDETV. The interval 31–79 is disordered; that stretch reads QKEETKTTNKDNQKEDETVKNQSNQSNQSNQTKQTNTKQQKHQPKENSH. Low complexity predominate over residues 50–68; that stretch reads KNQSNQSNQSNQTKQTNTK.

Belongs to the GrpE family. Homodimer.

It is found in the cytoplasm. Its function is as follows. Participates actively in the response to hyperosmotic and heat shock by preventing the aggregation of stress-denatured proteins, in association with DnaK and GrpE. It is the nucleotide exchange factor for DnaK and may function as a thermosensor. Unfolded proteins bind initially to DnaJ; upon interaction with the DnaJ-bound protein, DnaK hydrolyzes its bound ATP, resulting in the formation of a stable complex. GrpE releases ADP from DnaK; ATP binding to DnaK triggers the release of the substrate protein, thus completing the reaction cycle. Several rounds of ATP-dependent interactions between DnaJ, DnaK and GrpE are required for fully efficient folding. In Onion yellows phytoplasma (strain OY-M), this protein is Protein GrpE.